The chain runs to 216 residues: Probable nicotinate-nucleotide adenylyltransferase (216 aa).

This sequence belongs to the NadD family.

The catalysed reaction is nicotinate beta-D-ribonucleotide + ATP + H(+) = deamido-NAD(+) + diphosphate. The protein operates within cofactor biosynthesis; NAD(+) biosynthesis; deamido-NAD(+) from nicotinate D-ribonucleotide: step 1/1. In terms of biological role, catalyzes the reversible adenylation of nicotinate mononucleotide (NaMN) to nicotinic acid adenine dinucleotide (NaAD). The protein is Probable nicotinate-nucleotide adenylyltransferase of Shewanella baltica (strain OS185).